We begin with the raw amino-acid sequence, 201 residues long: Imidazoleglycerol-phosphate dehydratase (201 aa).

The protein belongs to the imidazoleglycerol-phosphate dehydratase family.

It localises to the cytoplasm. The enzyme catalyses D-erythro-1-(imidazol-4-yl)glycerol 3-phosphate = 3-(imidazol-4-yl)-2-oxopropyl phosphate + H2O. Its pathway is amino-acid biosynthesis; L-histidine biosynthesis; L-histidine from 5-phospho-alpha-D-ribose 1-diphosphate: step 6/9. The protein is Imidazoleglycerol-phosphate dehydratase of Methanopyrus kandleri (strain AV19 / DSM 6324 / JCM 9639 / NBRC 100938).